The following is a 694-amino-acid chain: Elongation factor G (694 aa).

One can recognise a tr-type G domain in the interval 6–288 (KLYRNIGIAA…GVIEYLPSPT (283 aa)). GTP-binding positions include 15 to 22 (AHVDAGKT), 86 to 90 (DTPGH), and 140 to 143 (NKMD).

The protein belongs to the TRAFAC class translation factor GTPase superfamily. Classic translation factor GTPase family. EF-G/EF-2 subfamily.

It localises to the cytoplasm. Catalyzes the GTP-dependent ribosomal translocation step during translation elongation. During this step, the ribosome changes from the pre-translocational (PRE) to the post-translocational (POST) state as the newly formed A-site-bound peptidyl-tRNA and P-site-bound deacylated tRNA move to the P and E sites, respectively. Catalyzes the coordinated movement of the two tRNA molecules, the mRNA and conformational changes in the ribosome. The sequence is that of Elongation factor G from Legionella pneumophila (strain Paris).